The sequence spans 777 residues: Elongation factor G, mitochondrial (777 aa).

Positions Leu-34–Met-338 constitute a tr-type G domain. GTP-binding positions include Ala-43–Thr-50, Asp-136–His-140, and Asn-190–Asp-193.

Belongs to the TRAFAC class translation factor GTPase superfamily. Classic translation factor GTPase family. EF-G/EF-2 subfamily.

It localises to the mitochondrion. It functions in the pathway protein biosynthesis; polypeptide chain elongation. Its function is as follows. Mitochondrial GTPase that catalyzes the GTP-dependent ribosomal translocation step during translation elongation. During this step, the ribosome changes from the pre-translocational (PRE) to the post-translocational (POST) state as the newly formed A-site-bound peptidyl-tRNA and P-site-bound deacylated tRNA move to the P and E sites, respectively. Catalyzes the coordinated movement of the two tRNA molecules, the mRNA and conformational changes in the ribosome. The sequence is that of Elongation factor G, mitochondrial from Malassezia globosa (strain ATCC MYA-4612 / CBS 7966) (Dandruff-associated fungus).